The chain runs to 37 residues: Cytochrome b6-f complex subunit 5 (37 aa).

A helical transmembrane segment spans residues 5–25 (LLFGIVLGLIPVTLTGLFVAA).

Belongs to the PetG family. As to quaternary structure, the 4 large subunits of the cytochrome b6-f complex are cytochrome b6, subunit IV (17 kDa polypeptide, PetD), cytochrome f and the Rieske protein, while the 4 small subunits are PetG, PetL, PetM and PetN. The complex functions as a dimer.

The protein localises to the plastid. It localises to the chloroplast thylakoid membrane. Component of the cytochrome b6-f complex, which mediates electron transfer between photosystem II (PSII) and photosystem I (PSI), cyclic electron flow around PSI, and state transitions. PetG is required for either the stability or assembly of the cytochrome b6-f complex. The polypeptide is Cytochrome b6-f complex subunit 5 (Guillardia theta (Cryptophyte)).